A 281-amino-acid chain; its full sequence is Bifunctional protein FolD (281 aa).

NADP(+) contacts are provided by residues 164–166 (GRS), S189, and T230.

The protein belongs to the tetrahydrofolate dehydrogenase/cyclohydrolase family. Homodimer.

It catalyses the reaction (6R)-5,10-methylene-5,6,7,8-tetrahydrofolate + NADP(+) = (6R)-5,10-methenyltetrahydrofolate + NADPH. It carries out the reaction (6R)-5,10-methenyltetrahydrofolate + H2O = (6R)-10-formyltetrahydrofolate + H(+). The protein operates within one-carbon metabolism; tetrahydrofolate interconversion. Catalyzes the oxidation of 5,10-methylenetetrahydrofolate to 5,10-methenyltetrahydrofolate and then the hydrolysis of 5,10-methenyltetrahydrofolate to 10-formyltetrahydrofolate. The protein is Bifunctional protein FolD of Dictyoglomus turgidum (strain DSM 6724 / Z-1310).